A 417-amino-acid polypeptide reads, in one-letter code: D-amino acid dehydrogenase (417 aa).

3 to 17 (VVILGSGVVGVSTAW) is a binding site for FAD.

This sequence belongs to the DadA oxidoreductase family. It depends on FAD as a cofactor.

The enzyme catalyses a D-alpha-amino acid + A + H2O = a 2-oxocarboxylate + AH2 + NH4(+). The protein operates within amino-acid degradation; D-alanine degradation; NH(3) and pyruvate from D-alanine: step 1/1. Functionally, oxidative deamination of D-amino acids. The polypeptide is D-amino acid dehydrogenase (Pectobacterium carotovorum subsp. carotovorum (strain PC1)).